Reading from the N-terminus, the 58-residue chain is Small ribosomal subunit protein bS21 (58 aa).

It belongs to the bacterial ribosomal protein bS21 family.

This Latilactobacillus sakei subsp. sakei (strain 23K) (Lactobacillus sakei subsp. sakei) protein is Small ribosomal subunit protein bS21.